A 696-amino-acid polypeptide reads, in one-letter code: DNA ligase (696 aa).

NAD(+) contacts are provided by residues 41–45, 90–91, and E120; these read DGQYD and SL. The active-site N6-AMP-lysine intermediate is K122. 4 residues coordinate NAD(+): R143, E180, K296, and K320. Residues C414, C417, C433, and C439 each contribute to the Zn(2+) site. Positions 603-692 constitute a BRCT domain; it reads STPRTLEGLT…PDAVARPAEE (90 aa).

The protein belongs to the NAD-dependent DNA ligase family. LigA subfamily. Mg(2+) serves as cofactor. The cofactor is Mn(2+).

The enzyme catalyses NAD(+) + (deoxyribonucleotide)n-3'-hydroxyl + 5'-phospho-(deoxyribonucleotide)m = (deoxyribonucleotide)n+m + AMP + beta-nicotinamide D-nucleotide.. Its function is as follows. DNA ligase that catalyzes the formation of phosphodiester linkages between 5'-phosphoryl and 3'-hydroxyl groups in double-stranded DNA using NAD as a coenzyme and as the energy source for the reaction. It is essential for DNA replication and repair of damaged DNA. The protein is DNA ligase of Kineococcus radiotolerans (strain ATCC BAA-149 / DSM 14245 / SRS30216).